Here is a 169-residue protein sequence, read N- to C-terminus: Disulfide bond formation protein B (169 aa).

Over 1–13 the chain is Cytoplasmic; the sequence is MSQLQQFCHNRFS. The chain crosses the membrane as a helical span at residues 14-30; it reads WGLLLLSAIGLELAALF. Residues 31 to 48 lie on the Periplasmic side of the membrane; the sequence is FQYGMDLAPCVMCIYIRV. Cys40 and Cys43 are joined by a disulfide. A helical transmembrane segment spans residues 49-64; the sequence is AVLGIILAALIGILQP. At 65–71 the chain is on the cytoplasmic side; that stretch reads KVWLLRL. A helical membrane pass occupies residues 72–89; sequence VGMAGWAVSAVWGFKLAY. The Periplasmic segment spans residues 90 to 144; that stretch reads ELNQMQVNPSPFATCSFYPEFPSFMPLDTWLPSVFSPTGMCSDSPWSWLSVSMAQ. Residues Cys104 and Cys130 are joined by a disulfide bond. The chain crosses the membrane as a helical span at residues 145–163; it reads WMMLGFAIYGVIWLLMLLP. The Cytoplasmic portion of the chain corresponds to 164-169; it reads ALKSAK.

It belongs to the DsbB family.

The protein localises to the cell inner membrane. In terms of biological role, required for disulfide bond formation in some periplasmic proteins. Acts by oxidizing the DsbA protein. This Shewanella frigidimarina (strain NCIMB 400) protein is Disulfide bond formation protein B.